Here is a 100-residue protein sequence, read N- to C-terminus: Urease subunit gamma (100 aa).

This sequence belongs to the urease gamma subunit family. In terms of assembly, heterotrimer of UreA (gamma), UreB (beta) and UreC (alpha) subunits. Three heterotrimers associate to form the active enzyme.

It localises to the cytoplasm. The catalysed reaction is urea + 2 H2O + H(+) = hydrogencarbonate + 2 NH4(+). Its pathway is nitrogen metabolism; urea degradation; CO(2) and NH(3) from urea (urease route): step 1/1. The protein is Urease subunit gamma of Corynebacterium glutamicum (strain R).